A 162-amino-acid chain; its full sequence is Universal stress protein MJ0577 (162 aa).

Residues P11, V41, 127–133 (GSHGKTN), and 141–143 (SVT) contribute to the ATP site.

The protein belongs to the universal stress protein A family. As to quaternary structure, homodimer. The cofactor is Mn(2+).

The protein resides in the cytoplasm. The polypeptide is Universal stress protein MJ0577 (Methanocaldococcus jannaschii (strain ATCC 43067 / DSM 2661 / JAL-1 / JCM 10045 / NBRC 100440) (Methanococcus jannaschii)).